The following is a 177-amino-acid chain: Outer membrane lipoprotein Blc (177 aa).

The signal sequence occupies residues Met1–Ala18. Cys19 is lipidated: N-palmitoyl cysteine. Residue Cys19 is the site of S-diacylglycerol cysteine attachment.

The protein belongs to the calycin superfamily. Lipocalin family. In terms of assembly, homodimer.

The protein localises to the cell outer membrane. Functionally, involved in the storage or transport of lipids necessary for membrane maintenance under stressful conditions. Displays a binding preference for lysophospholipids. This chain is Outer membrane lipoprotein Blc, found in Citrobacter freundii.